A 425-amino-acid polypeptide reads, in one-letter code: Serine--tRNA ligase 2 (425 aa).

234–236 (TAE) is an L-serine binding site. 265–267 (RVE) is an ATP binding site. Residue E288 participates in L-serine binding. 352–355 (EVSS) provides a ligand contact to ATP. An L-serine-binding site is contributed by S388.

The protein belongs to the class-II aminoacyl-tRNA synthetase family. Type-1 seryl-tRNA synthetase subfamily. As to quaternary structure, homodimer. The tRNA molecule binds across the dimer.

The protein localises to the cytoplasm. The catalysed reaction is tRNA(Ser) + L-serine + ATP = L-seryl-tRNA(Ser) + AMP + diphosphate + H(+). It catalyses the reaction tRNA(Sec) + L-serine + ATP = L-seryl-tRNA(Sec) + AMP + diphosphate + H(+). Its pathway is aminoacyl-tRNA biosynthesis; selenocysteinyl-tRNA(Sec) biosynthesis; L-seryl-tRNA(Sec) from L-serine and tRNA(Sec): step 1/1. Its function is as follows. Catalyzes the attachment of serine to tRNA(Ser). Is also able to aminoacylate tRNA(Sec) with serine, to form the misacylated tRNA L-seryl-tRNA(Sec), which will be further converted into selenocysteinyl-tRNA(Sec). The sequence is that of Serine--tRNA ligase 2 from Clostridium acetobutylicum (strain ATCC 824 / DSM 792 / JCM 1419 / IAM 19013 / LMG 5710 / NBRC 13948 / NRRL B-527 / VKM B-1787 / 2291 / W).